A 1158-amino-acid chain; its full sequence is Putative HERC2-like protein 3 (1158 aa).

Residues 281–302 form a disordered region; the sequence is PRKKRVPKKPESTDDEEKIGNE. A compositionally biased stretch (acidic residues) spans 293–302; sequence TDDEEKIGNE. One can recognise an MIB/HERC2 domain in the interval 587 to 660; sequence SGPELAAMMK…NYDLKLAELP (74 aa). Residues 662 to 684 are disordered; the sequence is PAQPSAEDSDTEDDSEAEQTERN. A compositionally biased stretch (acidic residues) spans 668–679; it reads EDSDTEDDSEAE.

This is Putative HERC2-like protein 3 (HERC2P3) from Homo sapiens (Human).